We begin with the raw amino-acid sequence, 977 residues long: P3N-PIPO polyprotein (977 aa).

Positions 132–274 (TCSSSGLDNL…QSITLRATHF (143 aa)) constitute a Peptidase S30 domain. Residues histidine 183, aspartate 192, and serine 225 each act as for P1 proteinase activity in the active site. Positions 325 to 328 (KITC) match the Involved in interaction with stylet and aphid transmission motif. The Involved in virions binding and aphid transmission signature appears at 583-585 (PTK). One can recognise a Peptidase C6 domain in the interval 609–731 (MYIAKEGYCY…ESPMAQYKVG (123 aa)). Catalysis depends on for helper component proteinase activity residues cysteine 617 and histidine 690.

The protein belongs to the potyviridae P3N-PIPO polyprotein family. Interacts (via PIPO domain) with host PCaP1 protein; this interaction may help to anchor the movement complex to the plasma membrane from which the complex could move to the plasmodesmata. Post-translationally, potyviral RNA is expressed as two polyproteins which undergo post-translational proteolytic processing. Genome polyprotein is processed by NIa-pro, P1 and HC-pro proteinases resulting in the production of at least ten individual proteins. P3N-PIPO is cleaved by P1 and HC-pro proteinases resulting in the production of three individual proteins. The P1 proteinase and the HC-pro cleave only their respective C-termini autocatalytically.

It is found in the host cell junction. Its subcellular location is the host plasmodesma. The enzyme catalyses Hydrolyzes a Gly-|-Gly bond at its own C-terminus, commonly in the sequence -Tyr-Xaa-Val-Gly-|-Gly, in the processing of the potyviral polyprotein.. Its function is as follows. Required for aphid transmission and also has proteolytic activity. Only cleaves a Gly-Gly dipeptide at its own C-terminus. Interacts with virions and aphid stylets. Acts as a suppressor of RNA-mediated gene silencing, also known as post-transcriptional gene silencing (PTGS), a mechanism of plant viral defense that limits the accumulation of viral RNAs. May have RNA-binding activity. Functionally, allows efficient cell to cell propagation, by bypassing the host cell wall barrier. Transports viral genome to neighboring plant cells directly through plasmosdesmata, without any budding. The chain is P3N-PIPO polyprotein from Nicotiana tabacum (Common tobacco).